Here is a 394-residue protein sequence, read N- to C-terminus: Acetate kinase 1 (394 aa).

Asn8 contacts Mg(2+). Lys15 contacts ATP. Substrate is bound at residue Arg90. The active-site Proton donor/acceptor is Asp147. ATP-binding positions include 207–211 (HLGSG) and 282–284 (DMR). Glu382 contacts Mg(2+).

It belongs to the acetokinase family. In terms of assembly, homodimer. Requires Mg(2+) as cofactor. It depends on Mn(2+) as a cofactor.

It is found in the cytoplasm. It carries out the reaction acetate + ATP = acetyl phosphate + ADP. Its pathway is metabolic intermediate biosynthesis; acetyl-CoA biosynthesis; acetyl-CoA from acetate: step 1/2. In terms of biological role, catalyzes the formation of acetyl phosphate from acetate and ATP. Can also catalyze the reverse reaction. The sequence is that of Acetate kinase 1 from Latilactobacillus sakei subsp. sakei (strain 23K) (Lactobacillus sakei subsp. sakei).